The primary structure comprises 379 residues: Carbamoyl phosphate synthase small chain (379 aa).

Positions 1–188 are CPSase; sequence MSTPAILALA…ELGKGFTQPE (188 aa). Residues serine 47, glycine 240, and glycine 242 each coordinate L-glutamine. A Glutamine amidotransferase type-1 domain is found at 192–379; sequence HVVAYDYGVK…FIELIEAAKK (188 aa). Cysteine 269 functions as the Nucleophile in the catalytic mechanism. The L-glutamine site is built by leucine 270, glutamine 273, asparagine 311, glycine 313, and phenylalanine 314. Residues histidine 353 and glutamate 355 contribute to the active site.

The protein belongs to the CarA family. Composed of two chains; the small (or glutamine) chain promotes the hydrolysis of glutamine to ammonia, which is used by the large (or ammonia) chain to synthesize carbamoyl phosphate. Tetramer of heterodimers (alpha,beta)4.

The enzyme catalyses hydrogencarbonate + L-glutamine + 2 ATP + H2O = carbamoyl phosphate + L-glutamate + 2 ADP + phosphate + 2 H(+). It catalyses the reaction L-glutamine + H2O = L-glutamate + NH4(+). Its pathway is amino-acid biosynthesis; L-arginine biosynthesis; carbamoyl phosphate from bicarbonate: step 1/1. It participates in pyrimidine metabolism; UMP biosynthesis via de novo pathway; (S)-dihydroorotate from bicarbonate: step 1/3. Functionally, small subunit of the glutamine-dependent carbamoyl phosphate synthetase (CPSase). CPSase catalyzes the formation of carbamoyl phosphate from the ammonia moiety of glutamine, carbonate, and phosphate donated by ATP, constituting the first step of 2 biosynthetic pathways, one leading to arginine and/or urea and the other to pyrimidine nucleotides. The small subunit (glutamine amidotransferase) binds and cleaves glutamine to supply the large subunit with the substrate ammonia. The polypeptide is Carbamoyl phosphate synthase small chain (Acinetobacter baylyi (strain ATCC 33305 / BD413 / ADP1)).